The chain runs to 341 residues: Retinol dehydrogenase 10-A (341 aa).

The helical; Signal-anchor transmembrane segment at 3 to 23 (IVLEFFLVTFRVLWAFVLAAG) threads the bilayer. 40 to 64 (LITGAGSGLGRLFALEFARRRAQLV) is an NADP(+) binding site. Substrate is bound at residue serine 197. Tyrosine 210 functions as the Proton acceptor in the catalytic mechanism.

This sequence belongs to the short-chain dehydrogenases/reductases (SDR) family.

The protein resides in the microsome membrane. The protein localises to the endoplasmic reticulum membrane. The enzyme catalyses all-trans-retinol + NADP(+) = all-trans-retinal + NADPH + H(+). It participates in cofactor metabolism; retinol metabolism. Functionally, retinol dehydrogenase with a clear preference for NADP. Converts all-trans-retinol to all-trans-retinal. Has no detectable activity towards 11-cis-retinol, 9-cis-retinol and 13-cis-retinol. The protein is Retinol dehydrogenase 10-A (rdh10-a) of Xenopus laevis (African clawed frog).